The sequence spans 176 residues: MAENSDLTSLEESFRKFAIYGDTKATGQEMTGKNWAKLCKDCKVIDGKSVTGTDVDIVFSKVKGKSARVITCEEFKKALEELSGKRFKGKSKEEAYEAICKLVVGKEPVSAGITKPAATGAVDRLTDTSKYTGSHKERFDESGKGKGKGGRETIVENTGYVSSYKLAGTYDAKVKK.

Positions threonine 126 to glutamate 152 are disordered. The span at serine 134 to glutamate 152 shows a compositional bias: basic and acidic residues.

This sequence belongs to the TPPP family.

It localises to the cytoplasm. Its subcellular location is the cytoskeleton. Regulator of microtubule dynamic that has microtubule bundling activity. This is Tubulin polymerization-promoting protein family member 3 (tppp3) from Xenopus tropicalis (Western clawed frog).